The primary structure comprises 371 residues: GDP-mannose 3,5-epimerase 2 (371 aa).

NAD(+) is bound by residues Gly29 to Lys55, Asp53, and Asp73. Substrate-binding positions include Gly98 and Ser138–Cys140. NAD(+) is bound by residues Tyr168 and Lys172. Tyr168 functions as the Proton acceptor in the catalytic mechanism. Substrate contacts are provided by residues Asn197, Glu210–Ala212, Lys219, Gln235–Arg237, Arg300, and Ser350.

It belongs to the NAD(P)-dependent epimerase/dehydratase family. Requires NAD(+) as cofactor.

It carries out the reaction GDP-alpha-D-mannose = GDP-beta-L-gulose. The catalysed reaction is GDP-beta-L-gulose = GDP-beta-L-galactose. It participates in cofactor biosynthesis; L-ascorbate biosynthesis via GDP-alpha-D-mannose pathway; L-ascorbate from GDP-alpha-D-mannose: step 1/5. Functionally, catalyzes a reversible epimerization of GDP-D-mannose that precedes the committed step in the biosynthesis of vitamin C (L-ascorbate), resulting in the hydrolysis of the highly energetic glycosyl-pyrophosphoryl linkage. Able to catalyze 2 distinct epimerization reactions and can release both GDP-L-galactose and GDP-L-gulose from GDP-mannose. The protein is GDP-mannose 3,5-epimerase 2 (GME-2) of Oryza sativa subsp. japonica (Rice).